A 353-amino-acid chain; its full sequence is Lipase ZK262.3 (353 aa).

Positions 1–22 (MPKNLRFSVFLLFLLCINSVFG) are cleaved as a signal peptide. 2 N-linked (GlcNAc...) asparagine glycosylation sites follow: Asn-32 and Asn-64. The active-site Nucleophile is Ser-163. The active-site Charge relay system is Asp-221. N-linked (GlcNAc...) asparagine glycosylation occurs at Asn-267. An intrachain disulfide couples Cys-277 to Cys-288. His-306 acts as the Charge relay system in catalysis.

Belongs to the AB hydrolase superfamily. Lipase family.

The protein resides in the secreted. In terms of biological role, probable lipase. The protein is Lipase ZK262.3 of Caenorhabditis elegans.